The sequence spans 290 residues: MIPSWVSLRAGDYEKIINVRRALSRHGIYTVCEGAKCPNIFHCWGEGTATFMILGEVCTRACRFCAVRTGNPRGYVDWGEVDRLVEAVRELGLKYVVVTSVARDDLPDGGASVFAAVVKKLREVGCVVEVLVPDFGGSPASVKTVVSSGPDVFAHNVETVRRLTPLVRDRRAGYERSLSVLKYAKEFGAPLTKSGLMLGLGETFEEVVETLEDLRRADVDIVTIGQYIKPSGSPRHLNPVRYATPEEFAKIKEVAVSLGFKAVASGPLVRSSYKAYSLYREALKNIVYLG.

Positions 32, 37, 43, 58, 62, 65, and 272 each coordinate [4Fe-4S] cluster. Residues 44 to 261 (WGEGTATFMI…KEVAVSLGFK (218 aa)) enclose the Radical SAM core domain.

Belongs to the radical SAM superfamily. Lipoyl synthase family. It depends on [4Fe-4S] cluster as a cofactor.

It localises to the cytoplasm. It carries out the reaction [[Fe-S] cluster scaffold protein carrying a second [4Fe-4S](2+) cluster] + N(6)-octanoyl-L-lysyl-[protein] + 2 oxidized [2Fe-2S]-[ferredoxin] + 2 S-adenosyl-L-methionine + 4 H(+) = [[Fe-S] cluster scaffold protein] + N(6)-[(R)-dihydrolipoyl]-L-lysyl-[protein] + 4 Fe(3+) + 2 hydrogen sulfide + 2 5'-deoxyadenosine + 2 L-methionine + 2 reduced [2Fe-2S]-[ferredoxin]. It participates in protein modification; protein lipoylation via endogenous pathway; protein N(6)-(lipoyl)lysine from octanoyl-[acyl-carrier-protein]: step 2/2. Its function is as follows. Catalyzes the radical-mediated insertion of two sulfur atoms into the C-6 and C-8 positions of the octanoyl moiety bound to the lipoyl domains of lipoate-dependent enzymes, thereby converting the octanoylated domains into lipoylated derivatives. The protein is Lipoyl synthase of Pyrobaculum aerophilum (strain ATCC 51768 / DSM 7523 / JCM 9630 / CIP 104966 / NBRC 100827 / IM2).